A 326-amino-acid chain; its full sequence is Acetyl-coenzyme A carboxylase carboxyl transferase subunit alpha (326 aa).

The CoA carboxyltransferase C-terminal domain maps to 44-298 (KLETRAMQLR…KQALLDNLDE (255 aa)).

The protein belongs to the AccA family. Acetyl-CoA carboxylase is a heterohexamer composed of biotin carboxyl carrier protein (AccB), biotin carboxylase (AccC) and two subunits each of ACCase subunit alpha (AccA) and ACCase subunit beta (AccD).

The protein localises to the cytoplasm. It catalyses the reaction N(6)-carboxybiotinyl-L-lysyl-[protein] + acetyl-CoA = N(6)-biotinyl-L-lysyl-[protein] + malonyl-CoA. It functions in the pathway lipid metabolism; malonyl-CoA biosynthesis; malonyl-CoA from acetyl-CoA: step 1/1. Functionally, component of the acetyl coenzyme A carboxylase (ACC) complex. First, biotin carboxylase catalyzes the carboxylation of biotin on its carrier protein (BCCP) and then the CO(2) group is transferred by the carboxyltransferase to acetyl-CoA to form malonyl-CoA. In Nostoc sp. (strain PCC 7120 / SAG 25.82 / UTEX 2576), this protein is Acetyl-coenzyme A carboxylase carboxyl transferase subunit alpha.